The sequence spans 764 residues: Probable cyclic nucleotide-gated ion channel 20, chloroplastic (764 aa).

A chloroplast-targeting transit peptide spans 1 to 25; it reads MASHNENDDIPMLPISDPSSRTRAR. Positions 1 to 40 are disordered; it reads MASHNENDDIPMLPISDPSSRTRARAFTSRSRSVSLSNPT. Positions 19–33 are enriched in low complexity; that stretch reads SSRTRARAFTSRSRS. At 26 to 204 the chain is on the stromal side; it reads AFTSRSRSVS…PHAKEVQTWT (179 aa). A helical membrane pass occupies residues 205–225; the sequence is KFFALSCLLAIFIDPLFFFLI. Over 226 to 242 the chain is Lumenal; sequence KVQEQNKCIMIDWPMTK. A helical membrane pass occupies residues 243–263; that stretch reads AFVAVRSVTDVIFTMNILLQF. The Stromal segment spans residues 264–295; that stretch reads RLAYVARESTVVGAGQLVSHPKKIALHYLKGK. A helical transmembrane segment spans residues 296-316; sequence FFLDLFIVMPLPQILILWIIP. The Lumenal segment spans residues 317–329; the sequence is AHLGASGANYAKN. Residues 330 to 350 traverse the membrane as a helical segment; sequence LLRAAVLFQYIPKLYRLLPFL. At 351 to 366 the chain is on the stromal side; sequence AGQTPTGFIFESAWAN. The helical transmembrane segment at 367–387 threads the bilayer; it reads FVINLLTFMLAGHVVGSCWYL. Residues 388–488 lie on the Lumenal side of the membrane; sequence FGLQRVNQCL…GNQVPSYFLG (101 aa). A helical membrane pass occupies residues 489 to 509; the sequence is EVFFTMGIIGLGLLLFALLIG. Residues 510 to 764 lie on the Stromal side of the membrane; it reads NMQNFLQALG…LCTPQSSYSL (255 aa). Residues 593–710 and glutamate 658 each bind a nucleoside 3',5'-cyclic phosphate; that span reads IFSL…EDVT. The tract at residues 713–729 is calmodulin-binding; it reads FSRFLRSHRVQGAIRYD. Positions 734–763 constitute an IQ domain; sequence RLRAARQIQVAWRYRRRRLHRLCTPQSSYS.

This sequence belongs to the cyclic nucleotide-gated cation channel (TC 1.A.1.5) family. In terms of assembly, homotetramer or heterotetramer.

It localises to the plastid. The protein resides in the chloroplast thylakoid membrane. Probable cyclic nucleotide-gated ion channel. This Arabidopsis thaliana (Mouse-ear cress) protein is Probable cyclic nucleotide-gated ion channel 20, chloroplastic (CNGC20).